The chain runs to 913 residues: ER degradation-enhancing alpha-mannosidase-like protein 3 (913 aa).

An N-terminal signal peptide occupies residues 1-15 (MGCPAVEARRWGDMW). Asparagine 104 carries N-linked (GlcNAc...) asparagine glycosylation. Glutamate 132 (proton donor) is an active-site residue. An N-linked (GlcNAc...) asparagine glycan is attached at asparagine 181. The active site involves aspartate 279. Glutamate 373 (proton donor) is an active-site residue. The active site involves glutamate 391. Threonine 477 provides a ligand contact to Ca(2+). N-linked (GlcNAc...) asparagine glycosylation occurs at asparagine 497. Residues 660-766 (LSKHLAGAQG…KEGNIILDAI (107 aa)) enclose the PA domain. Asparagine 797 is a glycosylation site (N-linked (GlcNAc...) asparagine). A disordered region spans residues 823–895 (EESPVSQPEV…NKVQPMESIL (73 aa)). Residues 826–839 (PVSQPEVPSSDSPS) show a composition bias toward low complexity. A compositionally biased stretch (basic and acidic residues) spans 843–866 (RTSERDITPESQEHKTEETEHSPK). The Prevents secretion from ER motif lies at 910–913 (KDEL).

It belongs to the glycosyl hydrolase 47 family. Ca(2+) serves as cofactor.

The protein resides in the endoplasmic reticulum lumen. It catalyses the reaction N(4)-(alpha-D-Man-(1-&gt;2)-alpha-D-Man-(1-&gt;2)-alpha-D-Man-(1-&gt;3)-[alpha-D-Man-(1-&gt;2)-alpha-D-Man-(1-&gt;3)-[alpha-D-Man-(1-&gt;2)-alpha-D-Man-(1-&gt;6)]-alpha-D-Man-(1-&gt;6)]-beta-D-Man-(1-&gt;4)-beta-D-GlcNAc-(1-&gt;4)-beta-D-GlcNAc)-L-asparaginyl-[protein] (N-glucan mannose isomer 9A1,2,3B1,2,3) + 4 H2O = N(4)-(alpha-D-Man-(1-&gt;3)-[alpha-D-Man-(1-&gt;3)-[alpha-D-Man-(1-&gt;6)]-alpha-D-Man-(1-&gt;6)]-beta-D-Man-(1-&gt;4)-beta-D-GlcNAc-(1-&gt;4)-beta-D-GlcNAc)-L-asparaginyl-[protein] (N-glucan mannose isomer 5A1,2) + 4 beta-D-mannose. The enzyme catalyses N(4)-(alpha-D-Man-(1-&gt;2)-alpha-D-Man-(1-&gt;2)-alpha-D-Man-(1-&gt;3)-[alpha-D-Man-(1-&gt;3)-[alpha-D-Man-(1-&gt;2)-alpha-D-Man-(1-&gt;6)]-alpha-D-Man-(1-&gt;6)]-beta-D-Man-(1-&gt;4)-beta-D-GlcNAc-(1-&gt;4)-beta-D-GlcNAc)-L-asparaginyl-[protein] (N-glucan mannose isomer 8A1,2,3B1,3) + 3 H2O = N(4)-(alpha-D-Man-(1-&gt;3)-[alpha-D-Man-(1-&gt;3)-[alpha-D-Man-(1-&gt;6)]-alpha-D-Man-(1-&gt;6)]-beta-D-Man-(1-&gt;4)-beta-D-GlcNAc-(1-&gt;4)-beta-D-GlcNAc)-L-asparaginyl-[protein] (N-glucan mannose isomer 5A1,2) + 3 beta-D-mannose. It functions in the pathway protein modification; protein glycosylation. May be involved in endoplasmic reticulum-associated degradation (ERAD). The sequence is that of ER degradation-enhancing alpha-mannosidase-like protein 3 (edem3) from Xenopus laevis (African clawed frog).